Here is a 30-residue protein sequence, read N- to C-terminus: V-type proton ATPase catalytic subunit A isoform 2 (30 aa).

Belongs to the ATPase alpha/beta chains family. As to quaternary structure, V-ATPase is a heteromultimeric enzyme composed of a peripheral catalytic V1 complex (main components: subunits A, B, C, D, E, and F) attached to an integral membrane V0 proton pore complex (main component: the proteolipid protein).

The enzyme catalyses ATP + H2O + 4 H(+)(in) = ADP + phosphate + 5 H(+)(out). Its function is as follows. Catalytic subunit of the peripheral V1 complex of vacuolar ATPase. V-ATPase vacuolar ATPase is responsible for acidifying a variety of intracellular compartments in eukaryotic cells. The polypeptide is V-type proton ATPase catalytic subunit A isoform 2 (Equisetum arvense (Field horsetail)).